A 689-amino-acid chain; its full sequence is MTEYSLPTMNLWNNSTSDDNVSMMEAFMSSDLSFWATNNSTSAAVVGVNSNLPHASSNTPSVFAPSSSTSASTLSAAATVDASKSMPFFNQETLQQRLQALIDGARETWTYAIFWQSSVVDFSSPSVLGWGDGYYKGEEDKAKRKLSVSSPAYIAEQEHRKKVLRELNSLISGAPPGTDDAVDEEVTDTEWFFLISMTQSFVNGSGLPGQALYSSSPIWVAGTEKLAASHCERVRQAQGFGLQTIVCIPSANGVVELGSTELIVQSSDLMNKVRVLFNFSNDLGSGSWAVQPESDPSALWLTDPSSSGMEVRESLNTVQTNSVPSSNSNKQIAYGNENNHPSGNGQSCYNQQQQKNPPQQQTQGFFTRELNFSEFGFDGSSNRNGNSSVSCKPESGEILNFGDSTKKSASSANVNLFTGQSQFGAGEENNNKNKKRSATSRGSNEEGMLSFVSGTVLPSSGMKSGGGGGEDSEHSDLEASVVKEADSSRVVEPEKRPRKRGRKPANGREEPLNHVEAERQRREKLNQRFYALRAVVPNVSKMDKASLLGDAISYINELKSKLQNTESDKEDLKSQIEDLKKESRRPGPPPPPNQDLKMSSHTGGKIVDVDIDVKIIGWDAMIRIQCNKKNHPAARLMAALMELDLDVHHASVSVVNDLMIQQATVKMGSRHYTEEQLRVALTSKIAETH.

A JAZ-interaction domain region spans residues 94-172; the sequence is LQQRLQALID…VLRELNSLIS (79 aa). Polar residues predominate over residues 316–349; sequence NTVQTNSVPSSNSNKQIAYGNENNHPSGNGQSCY. 2 disordered regions span residues 316 to 361 and 420 to 519; these read NTVQ…PQQQ and QSQF…EAER. The segment covering 350–361 has biased composition (low complexity); the sequence is NQQQQKNPPQQQ. Residues 471–495 are compositionally biased toward basic and acidic residues; it reads DSEHSDLEASVVKEADSSRVVEPEK. Residues 496-505 are compositionally biased toward basic residues; sequence RPRKRGRKPA. Basic and acidic residues predominate over residues 506–519; it reads NGREEPLNHVEAER. Residues 509 to 522 are basic motif; degenerate; it reads EEPLNHVEAERQRR. In terms of domain architecture, bHLH spans 509–558; it reads EEPLNHVEAERQRREKLNQRFYALRAVVPNVSKMDKASLLGDAISYINEL. A helix-loop-helix motif region spans residues 523-558; the sequence is EKLNQRFYALRAVVPNVSKMDKASLLGDAISYINEL. The segment at 563 to 602 is disordered; sequence QNTESDKEDLKSQIEDLKKESRRPGPPPPPNQDLKMSSHT. Residues 566 to 585 are compositionally biased toward basic and acidic residues; it reads ESDKEDLKSQIEDLKKESRR.

Interacts (via N-terminus) with MED25. Interacts (via N-terminus) with JAZ7. MED25 and JAZ7 compete with each other to bind to MYC2. Interacts (via N-terminus) with MTB1. MTB1 and MED25 compete with each other to bind to MYC2. As to expression, expressed at low levels in roots, stems, leaves, flowers and fruits.

It localises to the nucleus. Its function is as follows. Transcriptional activator that binds to the G-box motif (5'-AACGTG-3') found in the promoter of the jasmonate-induced gene LAPA1. Acts as a negative regulator of blue light-mediated photomorphogenesis and positively regulates root growth. Promotes growth in response to the phytohormones abscisic acid (ABA) and jasmonate (JA). Binds to the G-box motif (5'-CACGTG-3') of the RBCS-3A gene promoter. Acts downstream of the jasmonate (JA) receptor to orchestrate JA-mediated activation of plant responses. Positively regulates both wound-responsive and pathogen-responsive genes through MYC2-targeted transcription factors (MTFs) involved in early response to JA. With JA2L forms a transcription module that regulates wounding-responsive genes. With ERF.C3 forms a transcription module that regulates pathogen-responsive genes. Plays a critical role in orchestrating JA-mediated defense gene expression during Botrytis cinerea infection. Negatively regulates defense responses to root-knot nematodes, potentially by mediating crosstalk among the hormones strigolactones, abscisic acid (ABA) and jasmonate (JA). Regulates the termination of JA-mediated defense responses by specifically binding the G-box (5'-CACATG-3') motifs in the promoters of MTB1, MTB2 and MTB3, which are transcription factors that negatively regulates JA signaling. May be involved in JA-induced chilling tolerance, possibly by ameliorating the antioxidant enzyme system of fruit and increasing proline and lycopene levels. This is Transcription factor MYC2 from Solanum lycopersicum (Tomato).